Reading from the N-terminus, the 274-residue chain is Leucine-rich repeat-containing protein 10 (274 aa).

LRR repeat units follow at residues 30 to 51 (LDRMVDLSGSQLRRFPLHVCSF), 52 to 74 (TELVKLYLSDNHLHSLPPDLAQL), 76 to 97 (NLQILALDFNNFKALPRVVCTL), 98 to 120 (KQLCILYLGNNKLCDLPDELSLL), 121 to 143 (QNLRTLWLESNCLTRLPDVVCEL), 145 to 166 (LLKTLHAGSNALRLLPGQLRRL), 167 to 189 (RELRTIWLSGNQLADFPSVLLRM), and 191 to 213 (FLEVIDVDRNSIRYFPSLAHLTN). Residues 236-274 (RVGRWAEETPEPDPRKARRYALAKEENQEPPPPLLPSSS) are disordered. Basic and acidic residues predominate over residues 239 to 250 (RWAEETPEPDPR). Positions 264–274 (EPPPPLLPSSS) are enriched in pro residues.

In terms of tissue distribution, detected specifically in the heart.

The protein localises to the nucleus. May play important roles in cardiac development and/or cardiac function. This Mus musculus (Mouse) protein is Leucine-rich repeat-containing protein 10 (Lrrc10).